The primary structure comprises 199 residues: MQVYTGPITRLIEEFSKLPGVGRKTAQRLAFHIINMNTNDVEALSKAIIDAKREIRYCSICCNITDTDPCSMCSNKSRDSSVICVVEDPRDVAAMERTREFKGQYHVLNGVISPMDGIGPDMLKIKELIQRLGNQEVKEIIMATNPTIEGEATAMYIARLVKPMGIKVTRIAHGLPVGGDLEYADEVTISKALEGRREI.

Residues 58 to 73 form a C4-type zinc finger; sequence CSICCNITDTDPCSMC. The 96-residue stretch at 81–176 folds into the Toprim domain; that stretch reads SVICVVEDPR…KVTRIAHGLP (96 aa).

This sequence belongs to the RecR family.

Functionally, may play a role in DNA repair. It seems to be involved in an RecBC-independent recombinational process of DNA repair. It may act with RecF and RecO. In Clostridioides difficile (strain 630) (Peptoclostridium difficile), this protein is Recombination protein RecR.